Here is a 581-residue protein sequence, read N- to C-terminus: Putative protein phosphatase 2C 22 (581 aa).

The signal sequence occupies residues 1 to 21 (MVISVPLFSSVLLALVVAVPA). One can recognise a PPM-type phosphatase domain in the interval 102–478 (KYASSAMQGL…NNATAILVQF (377 aa)). Mn(2+) is bound by residues D138, G139, D373, and N469. A disordered region spans residues 538 to 563 (SDEVAGGAAVAEQHQHNPEGGGEQQL).

It belongs to the PP2C family. Requires Mg(2+) as cofactor. Mn(2+) is required as a cofactor.

It catalyses the reaction O-phospho-L-seryl-[protein] + H2O = L-seryl-[protein] + phosphate. The enzyme catalyses O-phospho-L-threonyl-[protein] + H2O = L-threonyl-[protein] + phosphate. The sequence is that of Putative protein phosphatase 2C 22 from Oryza sativa subsp. japonica (Rice).